Consider the following 634-residue polypeptide: DNA gyrase subunit B (634 aa).

One can recognise a Toprim domain in the interval 416-530; the sequence is REIYIVEGDS…NGYIYIAMPP (115 aa). Mg(2+)-binding residues include Glu422, Asp495, and Asp497.

This sequence belongs to the type II topoisomerase GyrB family. In terms of assembly, heterotetramer, composed of two GyrA and two GyrB chains. In the heterotetramer, GyrA contains the active site tyrosine that forms a transient covalent intermediate with DNA, while GyrB binds cofactors and catalyzes ATP hydrolysis. It depends on Mg(2+) as a cofactor. Requires Mn(2+) as cofactor. Ca(2+) is required as a cofactor.

It is found in the cytoplasm. The enzyme catalyses ATP-dependent breakage, passage and rejoining of double-stranded DNA.. Its function is as follows. A type II topoisomerase that negatively supercoils closed circular double-stranded (ds) DNA in an ATP-dependent manner to modulate DNA topology and maintain chromosomes in an underwound state. Negative supercoiling favors strand separation, and DNA replication, transcription, recombination and repair, all of which involve strand separation. Also able to catalyze the interconversion of other topological isomers of dsDNA rings, including catenanes and knotted rings. Type II topoisomerases break and join 2 DNA strands simultaneously in an ATP-dependent manner. The protein is DNA gyrase subunit B of Borreliella burgdorferi (strain ATCC 35210 / DSM 4680 / CIP 102532 / B31) (Borrelia burgdorferi).